Here is a 990-residue protein sequence, read N- to C-terminus: Leucine--tRNA ligase (990 aa).

The 'HIGH' region motif lies at 74–85 (PYPSGKGLHVGH). The interval 573–602 (LPINLPDVPDYSPKTFDPEDAESDPEAPLS) is disordered. A 'KMSKS' region motif is present at residues 763–767 (KMGKS). ATP is bound at residue Lys-766.

The protein belongs to the class-I aminoacyl-tRNA synthetase family.

The protein resides in the cytoplasm. The catalysed reaction is tRNA(Leu) + L-leucine + ATP = L-leucyl-tRNA(Leu) + AMP + diphosphate. The polypeptide is Leucine--tRNA ligase (Bifidobacterium adolescentis (strain ATCC 15703 / DSM 20083 / NCTC 11814 / E194a)).